The primary structure comprises 273 residues: Formamidopyrimidine-DNA glycosylase (273 aa).

P2 acts as the Schiff-base intermediate with DNA in catalysis. E3 acts as the Proton donor in catalysis. K58 (proton donor; for beta-elimination activity) is an active-site residue. The DNA site is built by H91, R109, and R154. The FPG-type zinc finger occupies 239–273 (FCYARTGEPCRICKTPIRQIVQGQRSTFYCPNCQK). R263 (proton donor; for delta-elimination activity) is an active-site residue.

It belongs to the FPG family. Monomer. The cofactor is Zn(2+).

The catalysed reaction is Hydrolysis of DNA containing ring-opened 7-methylguanine residues, releasing 2,6-diamino-4-hydroxy-5-(N-methyl)formamidopyrimidine.. The enzyme catalyses 2'-deoxyribonucleotide-(2'-deoxyribose 5'-phosphate)-2'-deoxyribonucleotide-DNA = a 3'-end 2'-deoxyribonucleotide-(2,3-dehydro-2,3-deoxyribose 5'-phosphate)-DNA + a 5'-end 5'-phospho-2'-deoxyribonucleoside-DNA + H(+). In terms of biological role, involved in base excision repair of DNA damaged by oxidation or by mutagenic agents. Acts as a DNA glycosylase that recognizes and removes damaged bases. Has a preference for oxidized purines, such as 7,8-dihydro-8-oxoguanine (8-oxoG). Has AP (apurinic/apyrimidinic) lyase activity and introduces nicks in the DNA strand. Cleaves the DNA backbone by beta-delta elimination to generate a single-strand break at the site of the removed base with both 3'- and 5'-phosphates. The chain is Formamidopyrimidine-DNA glycosylase from Janthinobacterium sp. (strain Marseille) (Minibacterium massiliensis).